The chain runs to 310 residues: Ribosomal RNA small subunit methyltransferase H (310 aa).

S-adenosyl-L-methionine is bound by residues 35-37 (GGH), D52, F79, D100, and Q107.

The protein belongs to the methyltransferase superfamily. RsmH family.

It localises to the cytoplasm. The catalysed reaction is cytidine(1402) in 16S rRNA + S-adenosyl-L-methionine = N(4)-methylcytidine(1402) in 16S rRNA + S-adenosyl-L-homocysteine + H(+). In terms of biological role, specifically methylates the N4 position of cytidine in position 1402 (C1402) of 16S rRNA. This is Ribosomal RNA small subunit methyltransferase H from Anaeromyxobacter dehalogenans (strain 2CP-1 / ATCC BAA-258).